We begin with the raw amino-acid sequence, 182 residues long: Isopentenyl-diphosphate Delta-isomerase (182 aa).

2 residues coordinate Mn(2+): His25 and His32. The Nudix hydrolase domain occupies Leu30–Met164. Cys67 is an active-site residue. His69 contributes to the Mn(2+) binding site. A Mg(2+)-binding site is contributed by Glu87. Residues Glu114 and Glu116 each contribute to the Mn(2+) site. Glu116 is an active-site residue.

This sequence belongs to the IPP isomerase type 1 family. In terms of assembly, homodimer. Requires Mg(2+) as cofactor. It depends on Mn(2+) as a cofactor.

Its subcellular location is the cytoplasm. It catalyses the reaction isopentenyl diphosphate = dimethylallyl diphosphate. It participates in isoprenoid biosynthesis; dimethylallyl diphosphate biosynthesis; dimethylallyl diphosphate from isopentenyl diphosphate: step 1/1. Functionally, catalyzes the 1,3-allylic rearrangement of the homoallylic substrate isopentenyl (IPP) to its highly electrophilic allylic isomer, dimethylallyl diphosphate (DMAPP). This is Isopentenyl-diphosphate Delta-isomerase from Escherichia coli O45:K1 (strain S88 / ExPEC).